A 160-amino-acid chain; its full sequence is Keratin-associated protein 9-6 (160 aa).

16 repeat units span residues 4–8 (CCSPG), 13–17 (CCRTT), 18–22 (CCRTT), 37–41 (CCQPS), 42–46 (CCVSS), 47–51 (CCQPY), 56–60 (CCQNT), 61–65 (CCRTT), 66–70 (CCQPT), 75–79 (CCQPS), 80–84 (CCSTP), 90–94 (CCGSS), 95–99 (CCGQT), 140–144 (CCQPC), 149–153 (CCVSS), and 154–158 (CCQHS). The segment at 4–158 (CCSPGCQPTC…CCVSSCCQHS (155 aa)) is 16 X 5 AA repeats of C-C-[GSVRQ]-[QTSPHN]-[TPSGYC].

It belongs to the KRTAP type 9 family. Interacts with hair keratins.

Functionally, in the hair cortex, hair keratin intermediate filaments are embedded in an interfilamentous matrix, consisting of hair keratin-associated proteins (KRTAP), which are essential for the formation of a rigid and resistant hair shaft through their extensive disulfide bond cross-linking with abundant cysteine residues of hair keratins. The matrix proteins include the high-sulfur and high-glycine-tyrosine keratins. The protein is Keratin-associated protein 9-6 of Homo sapiens (Human).